The chain runs to 995 residues: Bifunctional glutamine synthetase adenylyltransferase/adenylyl-removing enzyme (995 aa).

Residues 1-487 (MNVTKPATQR…LHAKLFYQPL (487 aa)) are adenylyl removase. Positions 492–995 (APAGLEIAGR…KAVVRKVFGS (504 aa)) are adenylyl transferase.

The protein belongs to the GlnE family. Requires Mg(2+) as cofactor.

The enzyme catalyses [glutamine synthetase]-O(4)-(5'-adenylyl)-L-tyrosine + phosphate = [glutamine synthetase]-L-tyrosine + ADP. The catalysed reaction is [glutamine synthetase]-L-tyrosine + ATP = [glutamine synthetase]-O(4)-(5'-adenylyl)-L-tyrosine + diphosphate. In terms of biological role, involved in the regulation of glutamine synthetase GlnA, a key enzyme in the process to assimilate ammonia. When cellular nitrogen levels are high, the C-terminal adenylyl transferase (AT) inactivates GlnA by covalent transfer of an adenylyl group from ATP to specific tyrosine residue of GlnA, thus reducing its activity. Conversely, when nitrogen levels are low, the N-terminal adenylyl removase (AR) activates GlnA by removing the adenylyl group by phosphorolysis, increasing its activity. The regulatory region of GlnE binds the signal transduction protein PII (GlnB) which indicates the nitrogen status of the cell. The protein is Bifunctional glutamine synthetase adenylyltransferase/adenylyl-removing enzyme of Mycobacterium marinum (strain ATCC BAA-535 / M).